We begin with the raw amino-acid sequence, 159 residues long: L-alanine exporter AlaE (159 aa).

4 helical membrane passes run 17 to 37 (FAMV…VSGM), 48 to 68 (LSIP…DYLL), 86 to 106 (MVAY…AVGA), and 110 to 130 (QIIT…IVYG).

It belongs to the AlaE exporter family.

The protein localises to the cell inner membrane. Exports L-alanine. The polypeptide is L-alanine exporter AlaE (Photobacterium profundum (strain SS9)).